A 144-amino-acid polypeptide reads, in one-letter code: Large ribosomal subunit protein uL16 (144 aa).

Belongs to the universal ribosomal protein uL16 family. Part of the 50S ribosomal subunit.

Binds 23S rRNA and is also seen to make contacts with the A and possibly P site tRNAs. The chain is Large ribosomal subunit protein uL16 from Clostridium perfringens (strain ATCC 13124 / DSM 756 / JCM 1290 / NCIMB 6125 / NCTC 8237 / Type A).